The sequence spans 85 residues: uncharacterized protein (85 aa).

Residues 39–59 (FILFEISMYIIFIVTFCYKII) form a helical membrane-spanning segment.

It is found in the host membrane. This is an uncharacterized protein from Gallid herpesvirus 2 (strain Chicken/Md5/ATCC VR-987) (GaHV-2).